We begin with the raw amino-acid sequence, 68 residues long: MGMRMMFTVFLLVVLATTVVSFTSDRAFDGRNAAASDKASDLISLAVRGCCSHPACSVNNPYFCGGKR.

The signal sequence occupies residues 1–21 (MGMRMMFTVFLLVVLATTVVS). Residues 22–48 (FTSDRAFDGRNAAASDKASDLISLAVR) constitute a propeptide that is removed on maturation. Intrachain disulfides connect cysteine 50-cysteine 56 and cysteine 51-cysteine 64. The segment at 52-54 (SHP) is ser-Xaa-Pro motif, crucial for potent interaction with nAChR. A Cysteine amide modification is found at cysteine 64. Positions 65–68 (GGKR) are excised as a propeptide.

The protein belongs to the conotoxin A superfamily. In terms of tissue distribution, expressed by the venom duct.

The protein localises to the secreted. Functionally, alpha-conotoxins act on postsynaptic membranes, they bind to the nicotinic acetylcholine receptors (nAChR) and thus inhibit them. The sequence is that of Alpha-conotoxin-like Lp1.2 from Conus leopardus (Leopard cone).